Consider the following 715-residue polypeptide: Beta-galactosidase 9 (715 aa).

A signal peptide spans methionine 1–alanine 20. The active-site Proton donor is the glutamate 178. Glutamate 247 serves as the catalytic Nucleophile.

Belongs to the glycosyl hydrolase 35 family.

Its subcellular location is the secreted. It localises to the extracellular space. The protein resides in the apoplast. The enzyme catalyses Hydrolysis of terminal non-reducing beta-D-galactose residues in beta-D-galactosides.. This Oryza sativa subsp. japonica (Rice) protein is Beta-galactosidase 9.